Reading from the N-terminus, the 547-residue chain is Chaperonin GroEL (547 aa).

Residues 29–32 (TMGP), Lys-50, 86–90 (DGTTT), Gly-414, 477–479 (NAA), and Asp-493 contribute to the ATP site.

It belongs to the chaperonin (HSP60) family. As to quaternary structure, forms a cylinder of 14 subunits composed of two heptameric rings stacked back-to-back. Interacts with the co-chaperonin GroES.

It localises to the cytoplasm. It catalyses the reaction ATP + H2O + a folded polypeptide = ADP + phosphate + an unfolded polypeptide.. Together with its co-chaperonin GroES, plays an essential role in assisting protein folding. The GroEL-GroES system forms a nano-cage that allows encapsulation of the non-native substrate proteins and provides a physical environment optimized to promote and accelerate protein folding. The protein is Chaperonin GroEL of Campylobacter rectus (Wolinella recta).